The sequence spans 202 residues: Urease accessory protein UreG (202 aa).

10-17 (GPVGSGKT) contacts GTP.

The protein belongs to the SIMIBI class G3E GTPase family. UreG subfamily. Homodimer. UreD, UreF and UreG form a complex that acts as a GTP-hydrolysis-dependent molecular chaperone, activating the urease apoprotein by helping to assemble the nickel containing metallocenter of UreC. The UreE protein probably delivers the nickel.

It localises to the cytoplasm. Facilitates the functional incorporation of the urease nickel metallocenter. This process requires GTP hydrolysis, probably effectuated by UreG. The sequence is that of Urease accessory protein UreG from Synechococcus sp. (strain JA-3-3Ab) (Cyanobacteria bacterium Yellowstone A-Prime).